Consider the following 120-residue polypeptide: Secreted effector PIT2 (120 aa).

The signal sequence occupies residues 1 to 25; that stretch reads MLFRSAFVLLIVAFASACLVQHVQA. The segment at 46 to 59 is PID14 protease inhibitor domain; that stretch reads KLNRRWWFGFTGSL.

As to quaternary structure, interacts with host cysteine proteases CP1A, CP1B, XCP2 and CP2. In terms of processing, cleaved by host target papain-like cysteine proteases (PLCPs) to release the embedded inhibitor peptide PID14.

The protein localises to the secreted. Its function is as follows. Secreted effector required for virulence. Functions as an inhibitor of a set of apoplastic maize papain-like cysteine proteases (PLCPs) including CP1A, CP1B, XCP2 and CP2, whose activity is directly linked with salicylic-acid-associated plant defenses. Acts as a substrate mimicking molecule for apoplastic PLCPs and its processing releases the embedded inhibitor peptide PID14, which in turn blocks PLCPs to modulate host immunity. This Mycosarcoma maydis (Corn smut fungus) protein is Secreted effector PIT2.